Here is a 161-residue protein sequence, read N- to C-terminus: 3-isopropylmalate dehydratase small subunit (161 aa).

The protein belongs to the LeuD family. LeuD type 2 subfamily. As to quaternary structure, heterodimer of LeuC and LeuD.

The enzyme catalyses (2R,3S)-3-isopropylmalate = (2S)-2-isopropylmalate. Its pathway is amino-acid biosynthesis; L-leucine biosynthesis; L-leucine from 3-methyl-2-oxobutanoate: step 2/4. Its function is as follows. Catalyzes the isomerization between 2-isopropylmalate and 3-isopropylmalate, via the formation of 2-isopropylmaleate. The chain is 3-isopropylmalate dehydratase small subunit from Pyrobaculum islandicum (strain DSM 4184 / JCM 9189 / GEO3).